The chain runs to 487 residues: L-tartrate/succinate antiporter (487 aa).

14 consecutive transmembrane segments (helical) span residues 10–30, 33–53, 54–74, 93–113, 137–157, 189–209, 236–256, 292–312, 313–333, 340–360, 370–390, 393–413, 418–438, and 465–485; these read YLAPLAVIAIIALIPVPAGLE, TWLYFAVFTGVIVGLILEPVP, GAVVAMVGISIIAILSPWLLF, WAVSGFSNSVIWLIFAAFMFG, TLFLGYAVMFSELILAPVTPS, IGSYIMWMGIVADCVTSAIFL, FLGMLPLSILLVLLVPWLAYV, LIVGALVLWIFGGDYIDAAMV, GYSVVALMLLLRIISWDDIVS, VFFWLASLITLATGLNNTGFI, SLSGYSPTMVMVALIVVFYLL, FFASATAYTSALAPMMIAAAL, IPLPVFCLMVGAAIGLGSILT, and IFGLIFLVLLVITGLLWMPVV.

It belongs to the SLC13A/DASS transporter (TC 2.A.47) family. DIT1 subfamily.

The protein resides in the cell inner membrane. It catalyses the reaction (2R,3R)-tartrate(out) + succinate(in) = (2R,3R)-tartrate(in) + succinate(out). Functionally, catalyzes the uptake of tartrate in exchange for intracellular succinate. Essential for anaerobic L-tartrate fermentation. The polypeptide is L-tartrate/succinate antiporter (ttdT) (Shigella sonnei (strain Ss046)).